We begin with the raw amino-acid sequence, 232 residues long: Ribonuclease 3 (232 aa).

The 128-residue stretch at L6 to G133 folds into the RNase III domain. Mg(2+) is bound at residue E46. D50 is an active-site residue. Mg(2+)-binding residues include D119 and E122. E122 is an active-site residue. The DRBM domain occupies D160–G229.

Belongs to the ribonuclease III family. As to quaternary structure, homodimer. It depends on Mg(2+) as a cofactor.

It localises to the cytoplasm. The catalysed reaction is Endonucleolytic cleavage to 5'-phosphomonoester.. Functionally, digests double-stranded RNA. Involved in the processing of primary rRNA transcript to yield the immediate precursors to the large and small rRNAs (23S and 16S). Processes some mRNAs, and tRNAs when they are encoded in the rRNA operon. Processes pre-crRNA and tracrRNA of type II CRISPR loci if present in the organism. This chain is Ribonuclease 3, found in Clostridium beijerinckii (strain ATCC 51743 / NCIMB 8052) (Clostridium acetobutylicum).